Here is a 528-residue protein sequence, read N- to C-terminus: MTVVPGDHLLEPEAAGGGGGDPPQGGCGSGGGGGGCDRYEPLPPALPAAGEQDCCGERVVINISGLRFETQLKTLCQFPETLLGDPKRRMRYFDPLRNEYFFDRNRPSFDAILYYYQSGGRIRRPVNVPIDIFSEEIRFYQLGEEAMEKFREDEGFLREEERPLPRRDFQRQVWLLFEYPESSGPARGIAIVSVLVILISIVIFCLETLPEFRDEKDYPASPSQDVFEAANNSTSGAPSGASSFSDPFFVVETLCIIWFSFELLVRFFACPSKATFSRNIMNLIDIVAIIPYFITLGTELAERQGNGQQAMSLAILRVIRLVRVFRIFKLSRHSKGLQILGQTLKASMRELGLLIFFLFIGVILFSSAVYFAEADDPSSGFNSIPDAFWWAVVTMTTVGYGDMHPVTIGGKIVGSLCAIAGVLTIALPVPVIVSNFNYFYHRETEGEEQAQYMHVGSCQHLSSSAEELRKARSNSTLSKSEYMVIEEGGMNHSAFPQTPFKTGNSTATCTTNNNPNSCVNIKKIFTDV.

The tract at residues 1 to 32 (MTVVPGDHLLEPEAAGGGGGDPPQGGCGSGGG) is disordered. At 1 to 187 (MTVVPGDHLL…EYPESSGPAR (187 aa)) the chain is on the cytoplasmic side. Positions 15 to 32 (AGGGGGDPPQGGCGSGGG) are enriched in gly residues. Residues 188–206 (GIAIVSVLVILISIVIFCL) traverse the membrane as a helical segment. The Extracellular portion of the chain corresponds to 207–247 (ETLPEFRDEKDYPASPSQDVFEAANNSTSGAPSGASSFSDP). Asn-232 carries an N-linked (GlcNAc...) asparagine glycan. The helical transmembrane segment at 248–269 (FFVVETLCIIWFSFELLVRFFA) threads the bilayer. Residue Cys-270 is the site of S-palmitoyl cysteine attachment. Residues 270–280 (CPSKATFSRNI) lie on the Cytoplasmic side of the membrane. Residues 281-301 (MNLIDIVAIIPYFITLGTELA) form a helical membrane-spanning segment. Over 302-315 (ERQGNGQQAMSLAI) the chain is Extracellular. Residues 316 to 334 (LRVIRLVRVFRIFKLSRHS) form a helical; Voltage-sensor membrane-spanning segment. The Cytoplasmic portion of the chain corresponds to 335 to 350 (KGLQILGQTLKASMRE). A helical membrane pass occupies residues 351 to 370 (LGLLIFFLFIGVILFSSAVY). The Extracellular segment spans residues 371 to 411 (FAEADDPSSGFNSIPDAFWWAVVTMTTVGYGDMHPVTIGGK). A Selectivity filter motif is present at residues 397-402 (TVGYGD). A helical transmembrane segment spans residues 412 to 434 (IVGSLCAIAGVLTIALPVPVIVS). Over 435 to 528 (NFNYFYHRET…VNIKKIFTDV (94 aa)) the chain is Cytoplasmic. The tract at residues 435–528 (NFNYFYHRET…VNIKKIFTDV (94 aa)) is interaction with KCNE4. Residue Tyr-452 is modified to Phosphotyrosine. Residue Ser-473 is modified to Phosphoserine; by PKA. The short motif at 526 to 528 (TDV) is the PDZ-binding element.

This sequence belongs to the potassium channel family. A (Shaker) (TC 1.A.1.2) subfamily. Kv1.3/KCNA3 sub-subfamily. In terms of assembly, homotetramer. Forms heterooligomers with KCNE4 which inhibits KCNA3 activity by impairing localization to the cell membrane. The stoichiometry of KCNA3 and KCNE4 in the heterooligomers are 4:1, 4:2, 4:3 or 4:4 respectively. Increasing the number of KCNE4 subunits steadily slows the activation KCNA3 and decreases its abundance at the cell membrane. However, a single subunit of KCNE4 is sufficient for the cooperative enhancement of the inactivating function of the channel. Interacts with SEC24D; this interaction is reduced in the presence of KCNE4. Interacts with DLG1, DLG2 and DLG4 via their PDZ domains. Post-translationally, N-glycosylation promotes the cell surface expression. In terms of processing, phosphorylation on Tyr-452 inhibits its channel activity.

The protein localises to the cell membrane. The enzyme catalyses K(+)(in) = K(+)(out). Its activity is regulated as follows. Activity is up-regulated by JAK2. Functionally, mediates the voltage-dependent potassium ion permeability of excitable membranes. Assuming opened or closed conformations in response to the voltage difference across the membrane, the protein forms a potassium-selective channel through which potassium ions may pass in accordance with their electrochemical gradient. The protein is Potassium voltage-gated channel subfamily A member 3 (Kcna3) of Mus musculus (Mouse).